The sequence spans 74 residues: ATP synthase subunit c (74 aa).

Transmembrane regions (helical) follow at residues Phe8–Ile28 and Ile52–Ile72.

The protein belongs to the ATPase C chain family. F-type ATPases have 2 components, F(1) - the catalytic core - and F(0) - the membrane proton channel. F(1) has five subunits: alpha(3), beta(3), gamma(1), delta(1), epsilon(1). F(0) has three main subunits: a(1), b(2) and c(10-14). The alpha and beta chains form an alternating ring which encloses part of the gamma chain. F(1) is attached to F(0) by a central stalk formed by the gamma and epsilon chains, while a peripheral stalk is formed by the delta and b chains.

Its subcellular location is the cell inner membrane. Functionally, f(1)F(0) ATP synthase produces ATP from ADP in the presence of a proton or sodium gradient. F-type ATPases consist of two structural domains, F(1) containing the extramembraneous catalytic core and F(0) containing the membrane proton channel, linked together by a central stalk and a peripheral stalk. During catalysis, ATP synthesis in the catalytic domain of F(1) is coupled via a rotary mechanism of the central stalk subunits to proton translocation. Its function is as follows. Key component of the F(0) channel; it plays a direct role in translocation across the membrane. A homomeric c-ring of between 10-14 subunits forms the central stalk rotor element with the F(1) delta and epsilon subunits. The polypeptide is ATP synthase subunit c (Rickettsia felis (strain ATCC VR-1525 / URRWXCal2) (Rickettsia azadi)).